Reading from the N-terminus, the 995-residue chain is Protein translocase subunit SecA (995 aa).

Residues Q86, 104 to 108, and D535 contribute to the ATP site; that span reads GEGKT. Positions 883–911 are disordered; that stretch reads AQTVSSDGNGEVVRKPQRRSTPQIGRNEL. Zn(2+)-binding residues include C912, C914, C923, and H924. The disordered stretch occupies residues 939-995; it reads PSAPPASKALKSTPATQTAVAEEAAKIQAAINSGKLPPTQTTPRGRQAPSVPRGKKR. Over residues 957 to 969 the composition is skewed to low complexity; the sequence is AVAEEAAKIQAAI.

Belongs to the SecA family. Monomer and homodimer. Part of the essential Sec protein translocation apparatus which comprises SecA, SecYEG and auxiliary proteins SecDF. Other proteins may also be involved. Zn(2+) is required as a cofactor.

The protein resides in the cell membrane. It is found in the cytoplasm. The catalysed reaction is ATP + H2O + cellular proteinSide 1 = ADP + phosphate + cellular proteinSide 2.. In terms of biological role, part of the Sec protein translocase complex. Interacts with the SecYEG preprotein conducting channel. Has a central role in coupling the hydrolysis of ATP to the transfer of proteins into and across the cell membrane, serving as an ATP-driven molecular motor driving the stepwise translocation of polypeptide chains across the membrane. This chain is Protein translocase subunit SecA, found in Chloroflexus aurantiacus (strain ATCC 29366 / DSM 635 / J-10-fl).